The chain runs to 720 residues: Engulfment and cell motility protein 3 (720 aa).

The region spanning 307–479 (EQREQLQALR…VVREQLARTL (173 aa)) is the ELMO domain. The 123-residue stretch at 541-663 (LRLCEGMLFR…WTDGLSALLG (123 aa)) folds into the PH domain.

In terms of assembly, probably interacts directly with the SH3-domain of DOCK1 via its SH3-binding site. Part of a complex with DOCK1 and RAC1. Interacts with ADGRB3.

The protein resides in the cytoplasm. Functionally, involved in cytoskeletal rearrangements required for phagocytosis of apoptotic cells and cell motility. Acts in association with DOCK1 and CRK. Was initially proposed to be required in complex with DOCK1 to activate Rac Rho small GTPases. May enhance the guanine nucleotide exchange factor (GEF) activity of DOCK1. The chain is Engulfment and cell motility protein 3 (Elmo3) from Rattus norvegicus (Rat).